The sequence spans 585 residues: Archaeosine synthase (585 aa).

The 69-residue stretch at 516–584 (TKTVEIDGFV…IGVEIRHVEE (69 aa)) folds into the PUA domain.

Belongs to the archaeosine synthase type 1 family. Homodimer.

It catalyses the reaction 7-cyano-7-carbaguanosine(15) in tRNA + L-glutamine + H2O = archaeosine(15) in tRNA + L-glutamate. The protein operates within tRNA modification; archaeosine-tRNA biosynthesis. Functionally, is responsible for the final step in the biosynthesis of archaeosine, a modified nucleoside present in the dihydrouridine loop (D-loop) of archaeal tRNA. Catalyzes the conversion of 7-cyano-7-deazaguanine (preQ0)-modified tRNA to archaeosine-tRNA, transforming a nitrile group to a formamidine group. The polypeptide is Archaeosine synthase (Haloferax volcanii (strain ATCC 29605 / DSM 3757 / JCM 8879 / NBRC 14742 / NCIMB 2012 / VKM B-1768 / DS2) (Halobacterium volcanii)).